Here is a 641-residue protein sequence, read N- to C-terminus: MTTFSKTPLLDTIKTPEDLRRLKVEQVRQVADELRQETIDAVSVTGGHFGAGLGVVELTTAIHYVFDTPRDRLIWDVGHQAYPHKILTGRRDRIRTLRTGGGLSGFTKRTESDYDPFGAAHSSTSISAGLGMAVARDLSGGKNNVIAVIGDGAMSAGMAYEAMNNAGAMNSRLIVILNDNDMSIAPPVGAMSAYLSRLYSGKTYRTLRDAAKQLGQHLPKVIANRASRVEEYSRGFMMDGGTLFEELGFYYVGPIDGHNLDHLLPVLKNVRDMETGPILVHVVTQKGKGYPPAEASADKYHAVVKFDVATGTQAKAKPNAPAYQNVFGQSLVKEAEKDDKVVGITAAMPSGTGIDIFAKAFPKRTFDVGIAEQHAVTFAAGLAAEGFKPFCAIYSTFLQRGYDQIVHDVCIQSLPVRFAIDRAGLVGADGATHAGSFDNAYLGCLPNMVIMAASDEAELVHMVATQVAINDRPSSVRYPRGEGRGVEMPEVGVPLPIGKGRMIRQGKQVALLSFGTRLAECEKAADELAAHGLSASIADARFMKPLDEELVLKLAREHEILITIEEGSIGGFGSHVMQYLADQGMLDGGLKMRSMVLPDEFQDHDTPAAMYARAGLDAKGIVRKVFEALGKDYTAEVVKLA.

Thiamine diphosphate contacts are provided by residues His79 and 120–122 (AHS). Asp151 contacts Mg(2+). Residues 152–153 (GA), Asn180, Tyr290, and Glu372 contribute to the thiamine diphosphate site. A Mg(2+)-binding site is contributed by Asn180.

The protein belongs to the transketolase family. DXPS subfamily. As to quaternary structure, homodimer. Requires Mg(2+) as cofactor. Thiamine diphosphate serves as cofactor.

It carries out the reaction D-glyceraldehyde 3-phosphate + pyruvate + H(+) = 1-deoxy-D-xylulose 5-phosphate + CO2. It participates in metabolic intermediate biosynthesis; 1-deoxy-D-xylulose 5-phosphate biosynthesis; 1-deoxy-D-xylulose 5-phosphate from D-glyceraldehyde 3-phosphate and pyruvate: step 1/1. Its function is as follows. Catalyzes the acyloin condensation reaction between C atoms 2 and 3 of pyruvate and glyceraldehyde 3-phosphate to yield 1-deoxy-D-xylulose-5-phosphate (DXP). The polypeptide is 1-deoxy-D-xylulose-5-phosphate synthase (Bradyrhizobium sp. (strain BTAi1 / ATCC BAA-1182)).